Reading from the N-terminus, the 380-residue chain is Chaperone protein DnaJ (380 aa).

Residues 5–70 (DFYDVLGVNR…QKRAAYDQYG (66 aa)) enclose the J domain. The CR-type zinc-finger motif lies at 139 to 217 (GCEKQIRIPT…CHGAGRVKSQ (79 aa)). 8 residues coordinate Zn(2+): Cys-152, Cys-155, Cys-169, Cys-172, Cys-191, Cys-194, Cys-205, and Cys-208. CXXCXGXG motif repeat units follow at residues 152-159 (CSHCHGSG), 169-176 (CPTCGGAG), 191-198 (CPTCHGSG), and 205-212 (CNICHGAG).

This sequence belongs to the DnaJ family. As to quaternary structure, homodimer. Zn(2+) is required as a cofactor.

Its subcellular location is the cytoplasm. Its function is as follows. Participates actively in the response to hyperosmotic and heat shock by preventing the aggregation of stress-denatured proteins and by disaggregating proteins, also in an autonomous, DnaK-independent fashion. Unfolded proteins bind initially to DnaJ; upon interaction with the DnaJ-bound protein, DnaK hydrolyzes its bound ATP, resulting in the formation of a stable complex. GrpE releases ADP from DnaK; ATP binding to DnaK triggers the release of the substrate protein, thus completing the reaction cycle. Several rounds of ATP-dependent interactions between DnaJ, DnaK and GrpE are required for fully efficient folding. Also involved, together with DnaK and GrpE, in the DNA replication of plasmids through activation of initiation proteins. The protein is Chaperone protein DnaJ of Laribacter hongkongensis (strain HLHK9).